The chain runs to 182 residues: ATP synthase subunit delta (182 aa).

It belongs to the ATPase delta chain family. As to quaternary structure, F-type ATPases have 2 components, F(1) - the catalytic core - and F(0) - the membrane proton channel. F(1) has five subunits: alpha(3), beta(3), gamma(1), delta(1), epsilon(1). F(0) has three main subunits: a(1), b(2) and c(10-14). The alpha and beta chains form an alternating ring which encloses part of the gamma chain. F(1) is attached to F(0) by a central stalk formed by the gamma and epsilon chains, while a peripheral stalk is formed by the delta and b chains.

The protein localises to the cell inner membrane. Functionally, f(1)F(0) ATP synthase produces ATP from ADP in the presence of a proton or sodium gradient. F-type ATPases consist of two structural domains, F(1) containing the extramembraneous catalytic core and F(0) containing the membrane proton channel, linked together by a central stalk and a peripheral stalk. During catalysis, ATP synthesis in the catalytic domain of F(1) is coupled via a rotary mechanism of the central stalk subunits to proton translocation. Its function is as follows. This protein is part of the stalk that links CF(0) to CF(1). It either transmits conformational changes from CF(0) to CF(1) or is implicated in proton conduction. The chain is ATP synthase subunit delta from Histophilus somni (strain 2336) (Haemophilus somnus).